A 456-amino-acid chain; its full sequence is Ribulose bisphosphate carboxylase large chain (456 aa).

Position 7 is an N6,N6,N6-trimethyllysine (lysine 7). Asparagine 116 and threonine 166 together coordinate substrate. Lysine 168 acts as the Proton acceptor in catalysis. Lysine 170 contributes to the substrate binding site. Lysine 194, aspartate 196, and glutamate 197 together coordinate Mg(2+). Lysine 194 is modified (N6-carboxylysine). The active-site Proton acceptor is histidine 287. Arginine 288, histidine 320, and serine 372 together coordinate substrate.

It belongs to the RuBisCO large chain family. Type I subfamily. In terms of assembly, heterohexadecamer of 8 large chains and 8 small chains; disulfide-linked. The disulfide link is formed within the large subunit homodimers. Requires Mg(2+) as cofactor. The disulfide bond which can form in the large chain dimeric partners within the hexadecamer appears to be associated with oxidative stress and protein turnover.

It is found in the plastid. The protein resides in the chloroplast. The enzyme catalyses 2 (2R)-3-phosphoglycerate + 2 H(+) = D-ribulose 1,5-bisphosphate + CO2 + H2O. The catalysed reaction is D-ribulose 1,5-bisphosphate + O2 = 2-phosphoglycolate + (2R)-3-phosphoglycerate + 2 H(+). Its function is as follows. RuBisCO catalyzes two reactions: the carboxylation of D-ribulose 1,5-bisphosphate, the primary event in carbon dioxide fixation, as well as the oxidative fragmentation of the pentose substrate in the photorespiration process. Both reactions occur simultaneously and in competition at the same active site. The polypeptide is Ribulose bisphosphate carboxylase large chain (Barnardia japonica (Chinese squill)).